The primary structure comprises 217 residues: UPF0173 metal-dependent hydrolase MJ1163 (217 aa).

Belongs to the UPF0173 family.

The polypeptide is UPF0173 metal-dependent hydrolase MJ1163 (Methanocaldococcus jannaschii (strain ATCC 43067 / DSM 2661 / JAL-1 / JCM 10045 / NBRC 100440) (Methanococcus jannaschii)).